The sequence spans 287 residues: uncharacterized protein (287 aa).

The region spanning Ser-115–Ser-287 is the ATP-grasp domain.

This is an uncharacterized protein from Mycoplasma genitalium (strain ATCC 33530 / DSM 19775 / NCTC 10195 / G37) (Mycoplasmoides genitalium).